Consider the following 690-residue polypeptide: Calpain-9 (690 aa).

The disordered stretch occupies residues 1 to 24; it reads MPYLYRAPGPQAHPVPKDARITHS. In terms of domain architecture, Calpain catalytic spans 42-337; that stretch reads LFEDADFPAS…FDKVEICNLT (296 aa). The Ca(2+) site is built by Leu-81, Gly-83, and Asp-88. The active site involves Cys-97. Glu-167 contacts Ca(2+). Catalysis depends on residues His-254 and Asn-278. Positions 284, 291, 312, 314, and 316 each coordinate Ca(2+). The interval 338–521 is domain III; sequence PDALEEDAIH…PPDQETEEEQ (184 aa). The tract at residues 498-519 is disordered; it reads GNVDIDLPEPPKPTPPDQETEE. 3 EF-hand domains span residues 518–552, 561–589, and 591–626; these read EEEQRFRALFEQVAGEDMEVTAEELEYVLNAVLQK, LSLISCKNIISLMDTSGNGKLEFDEFKVF, and DKLKQWINLFLRFDADKSGTMSTYELRTALKAAGFQ. The interval 522 to 690 is domain IV; sequence RFRALFEQVA…NEFIHLTMNI (169 aa). 10 residues coordinate Ca(2+): Asp-574, Ser-576, Asn-578, Lys-580, Glu-585, Asp-604, Asp-606, Ser-608, Thr-610, and Glu-615.

Belongs to the peptidase C2 family. As to expression, expressed predominantly in stomach.

Its function is as follows. Calcium-regulated non-lysosomal thiol-protease. In Homo sapiens (Human), this protein is Calpain-9 (CAPN9).